The sequence spans 249 residues: 23S rRNA (guanosine-2'-O-)-methyltransferase RlmB (249 aa).

S-adenosyl-L-methionine contacts are provided by G200, I220, and L229.

This sequence belongs to the class IV-like SAM-binding methyltransferase superfamily. RNA methyltransferase TrmH family. RlmB subfamily.

It is found in the cytoplasm. The catalysed reaction is guanosine(2251) in 23S rRNA + S-adenosyl-L-methionine = 2'-O-methylguanosine(2251) in 23S rRNA + S-adenosyl-L-homocysteine + H(+). Specifically methylates the ribose of guanosine 2251 in 23S rRNA. The polypeptide is 23S rRNA (guanosine-2'-O-)-methyltransferase RlmB (Xanthomonas axonopodis pv. citri (strain 306)).